We begin with the raw amino-acid sequence, 579 residues long: MISAVLNLPSTPLLPLLWFTLIIPASLTNPKFVWRFSITETWSTGNQAHSQTQGTADCSPQGCQDALLLNFHLSSVGNYDHPVICFLYDQTEYNCKNYWQETNLGCPYNYCNMHEIGLMCANGICTPNDRPFVRNRTSGGYILTIKDPWDPRWAQGVKGGLYATSWSSYPTATLQIKRVYVQQVPAPKSKQVDPPKSVQALQNLTSVVKSHEQKIQKLLSPPNSPNNEDPFSWLTLIRQGLNLTQAAGVRNLSHCFLCAALGKAPLVAVPLPTAFNITTDSTSSSQATSLPQVPLYRNPQSQTLPFCYSTPNSSWCDRTQAPSRTQTAPVGGYFWCNQTLSKTLNHASITQSLCVPVSLVPSLTLYSEGELAELASQLSSSNNIQKQAVFLPLIIGVSLASSLVASGLGTGALTHSIQSTQTLSTQVQAAIEASAESLASLQRQITSVAQVAAQNRRALDLLTAEKGGTCLFLGEECCYYVNESGLVDTNVKTLNKIKKELQQFNAPLTPGPPVWLLPVVQQMLPFLIPILILCLMLCLAPILIKFLRARVQEITRVTFNQMLLHPYTQLPTSDPNYAP.

The signal sequence occupies residues 1–22; the sequence is MISAVLNLPSTPLLPLLWFTLI. Positions 23-387 are surface protein; sequence IPASLTNPKF…LSSSNNIQKQ (365 aa). Over 23-523 the chain is Extracellular; sequence IPASLTNPKF…VWLLPVVQQM (501 aa). Asn135, Asn203, Asn242, and Asn251 each carry an N-linked (GlcNAc...) asparagine glycan. The CXXC signature appears at 255-258; it reads CFLC. 3 N-linked (GlcNAc...) asparagine glycosylation sites follow: Asn276, Asn312, and Asn337. The interval 388–408 is fusion peptide; the sequence is AVFLPLIIGVSLASSLVASGL. The interval 388 to 579 is transmembrane protein; sequence AVFLPLIIGV…LPTSDPNYAP (192 aa). Residues 453-469 carry the CKS-17 motif; sequence AQNRRALDLLTAEKGGT. Cys470 and Cys477 form a disulfide bridge. The short motif at 470-478 is the CX6CC element; sequence CLFLGEECC. An N-linked (GlcNAc...) asparagine glycan is attached at Asn482. A helical transmembrane segment spans residues 524–544; sequence LPFLIPILILCLMLCLAPILI. The Cytoplasmic portion of the chain corresponds to 545 to 579; it reads KFLRARVQEITRVTFNQMLLHPYTQLPTSDPNYAP.

Belongs to the gamma type-C retroviral envelope protein family. HERV class-I F(c)1 env subfamily. Specific enzymatic cleavages in vivo yield the mature SU and TM proteins. Post-translationally, the CXXC motif is highly conserved across a broad range of retroviral envelope proteins. It is thought to participate in the formation of a labile disulfide bond possibly with the CX6CC motif present in the transmembrane domain.

Its subcellular location is the cell membrane. Retroviral envelope proteins mediate receptor recognition and membrane fusion during early infection. Endogenous envelope proteins may have kept, lost or modified their original function during evolution. The polypeptide is ERV-BabFcenv provirus ancestral Env polyprotein (Papio anubis (Olive baboon)).